The chain runs to 282 residues: Homeobox protein pv.1 (282 aa).

Basic and acidic residues-rich tracts occupy residues 17 to 26 (EEAADGKDSM) and 44 to 59 (YAKE…DVQE). The disordered stretch occupies residues 17-128 (EEAADGKDSM…HRGESPKSDL (112 aa)). 2 stretches are compositionally biased toward polar residues: residues 86-96 (WGSSDDFSSVG) and 103-114 (EGSPSPMRNSQE). Residues 116–128 (ETDHRGESPKSDL) show a composition bias toward basic and acidic residues. The segment at residues 129 to 188 (QRHLRTAFTPQQISKLEQAFNKQRYLGASERKKLATSLRLSEIQVKTWFQNRRMKLKRQI) is a DNA-binding region (homeobox).

As to expression, expressed in the ventral marginal zone of blastulae. At early gastrulation, expression begins to spread to the animal pole (ectoderm), and at stage 11.5 is expressed in a gradient across the animal cap, with levels highest in the ventral region. At the end of gastrulation, predominantly localized to the ventral and lateral regions of the closing slit blastopore. Also expressed at a low level in ventral endoderm.

It localises to the nucleus. In terms of biological role, transcriptional repressor. Acts in a ventral signaling pathway downstream of bmp4, which suppresses dorsal mesoderm formation and leads to both ventral mesoderm and ventral ectoderm formation. Acts in the ectoderm to simultaneously specify epidermal lineages and restrict neuralization. Represses transcription of dorsal-specific genes. Binds to DNA, with preference for the target sequences 5'-TAATGC-3' and 5'-TAATTG-3'. Acts in a pathway downstream of bmp4 and fgf to negatively regulate erythroid specification. The polypeptide is Homeobox protein pv.1 (Xenopus laevis (African clawed frog)).